A 228-amino-acid chain; its full sequence is Octanoyltransferase (228 aa).

The BPL/LPL catalytic domain occupies 31–212 (EETDGILILL…KFEEVFEIKF (182 aa)). Substrate is bound by residues 76-83 (RGGKITFH), 143-145 (AIG), and 156-158 (GIA). Cys174 acts as the Acyl-thioester intermediate in catalysis.

This sequence belongs to the LipB family.

Its subcellular location is the cytoplasm. The catalysed reaction is octanoyl-[ACP] + L-lysyl-[protein] = N(6)-octanoyl-L-lysyl-[protein] + holo-[ACP] + H(+). The protein operates within protein modification; protein lipoylation via endogenous pathway; protein N(6)-(lipoyl)lysine from octanoyl-[acyl-carrier-protein]: step 1/2. Functionally, catalyzes the transfer of endogenously produced octanoic acid from octanoyl-acyl-carrier-protein onto the lipoyl domains of lipoate-dependent enzymes. Lipoyl-ACP can also act as a substrate although octanoyl-ACP is likely to be the physiological substrate. In Caldanaerobacter subterraneus subsp. tengcongensis (strain DSM 15242 / JCM 11007 / NBRC 100824 / MB4) (Thermoanaerobacter tengcongensis), this protein is Octanoyltransferase.